We begin with the raw amino-acid sequence, 205 residues long: Probable NAD(P)H dehydrogenase (quinone) FQR1-like 1 (205 aa).

The Flavodoxin-like domain maps to V5 to I192. Residues S11–H15, I112–G165, and H136 each bind FMN. Y13 is a binding site for NAD(+).

It belongs to the WrbA family. FMN is required as a cofactor.

Its subcellular location is the cell membrane. The enzyme catalyses a quinone + NADH + H(+) = a quinol + NAD(+). It catalyses the reaction a quinone + NADPH + H(+) = a quinol + NADP(+). Functionally, catalyzes the transfer of electrons from NADH and NADPH to reduce quinone to the hydroquinone state. The protein is Probable NAD(P)H dehydrogenase (quinone) FQR1-like 1 of Arabidopsis thaliana (Mouse-ear cress).